The sequence spans 314 residues: Methionyl-tRNA formyltransferase (314 aa).

(6S)-5,6,7,8-tetrahydrofolate is bound at residue 110–113 (SLLP).

It belongs to the Fmt family.

It carries out the reaction L-methionyl-tRNA(fMet) + (6R)-10-formyltetrahydrofolate = N-formyl-L-methionyl-tRNA(fMet) + (6S)-5,6,7,8-tetrahydrofolate + H(+). Its function is as follows. Attaches a formyl group to the free amino group of methionyl-tRNA(fMet). The formyl group appears to play a dual role in the initiator identity of N-formylmethionyl-tRNA by promoting its recognition by IF2 and preventing the misappropriation of this tRNA by the elongation apparatus. This Bacillus cereus (strain ATCC 14579 / DSM 31 / CCUG 7414 / JCM 2152 / NBRC 15305 / NCIMB 9373 / NCTC 2599 / NRRL B-3711) protein is Methionyl-tRNA formyltransferase.